The following is a 127-amino-acid chain: Small ribosomal subunit protein eS8 (127 aa).

Belongs to the eukaryotic ribosomal protein eS8 family. Part of the 30S ribosomal subunit.

This is Small ribosomal subunit protein eS8 from Pyrococcus furiosus (strain ATCC 43587 / DSM 3638 / JCM 8422 / Vc1).